An 800-amino-acid polypeptide reads, in one-letter code: Cation/H(+) antiporter 19 (800 aa).

The next 12 membrane-spanning stretches (helical) occupy residues 30 to 50 (FALP…RLLA), 60 to 77 (RVIA…SALG), 92 to 112 (LTVL…LVGL), 127 to 147 (LLIA…TSFV), 158 to 178 (QLPF…PVLA), 196 to 216 (MSAA…AIAL), 224 to 244 (LVSV…VVAI), 278 to 298 (FVTD…GIVA), 315 to 335 (LVSG…TDVT), 343 to 363 (WGLL…GTVG), 375 to 395 (AVTL…VLNI), and 408 to 428 (AILV…VMLI). The segment at 776 to 800 (ADTRPLVEEDAEYDQSSRDISDLTA) is disordered. Positions 790 to 800 (QSSRDISDLTA) are enriched in basic and acidic residues.

Belongs to the monovalent cation:proton antiporter 2 (CPA2) transporter (TC 2.A.37) family. CHX (TC 2.A.37.4) subfamily. Expressed in the whole plant but preferentially in pollen.

The protein resides in the membrane. In terms of biological role, may operate as a cation/H(+) antiporter. This is Cation/H(+) antiporter 19 (CHX19) from Arabidopsis thaliana (Mouse-ear cress).